Reading from the N-terminus, the 272-residue chain is HMP-PP phosphatase (272 aa).

The Nucleophile role is filled by D8. D8, D10, and D212 together coordinate Mg(2+).

Belongs to the HAD-like hydrolase superfamily. Cof family. Requires Mg(2+) as cofactor.

The enzyme catalyses 4-amino-2-methyl-5-(diphosphooxymethyl)pyrimidine + H2O = 4-amino-2-methyl-5-(phosphooxymethyl)pyrimidine + phosphate + H(+). Functionally, catalyzes the hydrolysis of 4-amino-2-methyl-5-hydroxymethylpyrimidine pyrophosphate (HMP-PP) to 4-amino-2-methyl-5-hydroxymethylpyrimidine phosphate (HMP-P). The chain is HMP-PP phosphatase from Escherichia coli (strain UTI89 / UPEC).